A 505-amino-acid chain; its full sequence is Protein amnionless (505 aa).

The first 20 residues, 1-20 (MGLHWQWLIWALVGLHVALA), serve as a signal peptide directing secretion. Topologically, residues 21–344 (TKWYGGGMDF…RPYNPNVSFS (324 aa)) are extracellular. A helical transmembrane segment spans residues 345 to 365 (SIVLILFCMALVGLVSVVILA). The Cytoplasmic portion of the chain corresponds to 366–505 (HFMPENPYLN…CEADTDEETI (140 aa)). The tract at residues 451–482 (GALEEAAKESQEQDEILSVPKMETGDLDARSV) is disordered. The segment covering 473–482 (ETGDLDARSV) has biased composition (basic and acidic residues).

In terms of tissue distribution, specifically expressed in nephrocytes.

The protein localises to the cell membrane. Functionally, required in the nephrocyte for normal uptake of proteins and elimination of toxins, and for maintenance of endocytic trafficking structures. May function together with Cubn. The chain is Protein amnionless from Drosophila melanogaster (Fruit fly).